The primary structure comprises 90 residues: Probable Fe(2+)-trafficking protein (90 aa).

Belongs to the Fe(2+)-trafficking protein family.

Functionally, could be a mediator in iron transactions between iron acquisition and iron-requiring processes, such as synthesis and/or repair of Fe-S clusters in biosynthetic enzymes. In Cupriavidus necator (strain ATCC 17699 / DSM 428 / KCTC 22496 / NCIMB 10442 / H16 / Stanier 337) (Ralstonia eutropha), this protein is Probable Fe(2+)-trafficking protein.